Reading from the N-terminus, the 197-residue chain is Elongation factor Ts (197 aa).

Residues 81–84 (TDFV) are involved in Mg(2+) ion dislocation from EF-Tu.

Belongs to the EF-Ts family.

The protein resides in the cytoplasm. Functionally, associates with the EF-Tu.GDP complex and induces the exchange of GDP to GTP. It remains bound to the aminoacyl-tRNA.EF-Tu.GTP complex up to the GTP hydrolysis stage on the ribosome. This chain is Elongation factor Ts, found in Petrotoga mobilis (strain DSM 10674 / SJ95).